The sequence spans 160 residues: Type IV major fimbrial protein FimA (160 aa).

Residues 1-7 constitute a propeptide, leader sequence; sequence MKSLQKG. An N-methylphenylalanine modification is found at phenylalanine 8. The helical transmembrane segment at 8 to 28 threads the bilayer; sequence FTLIELMIVVAIIGILAAFAI. Cysteine 63 and cysteine 105 are disulfide-bonded.

It belongs to the N-Me-Phe pilin family. In terms of assembly, the pili are polar flexible filaments of about 5.4 nanometers diameter and 2.5 micrometers average length; they consist of only a single polypeptide chain arranged in a helical configuration of five subunits per turn in the assembled pilus.

Its subcellular location is the fimbrium. It is found in the membrane. Functionally, major component of the type IV fimbriae that plays an essential role in twitching motility, natural transformation, and protease secretion. This chain is Type IV major fimbrial protein FimA (fimA), found in Dichelobacter nodosus (Bacteroides nodosus).